Reading from the N-terminus, the 132-residue chain is Small ribosomal subunit protein uS8 (132 aa).

It belongs to the universal ribosomal protein uS8 family. In terms of assembly, part of the 30S ribosomal subunit. Contacts proteins S5 and S12.

Its function is as follows. One of the primary rRNA binding proteins, it binds directly to 16S rRNA central domain where it helps coordinate assembly of the platform of the 30S subunit. This is Small ribosomal subunit protein uS8 from Leptospira biflexa serovar Patoc (strain Patoc 1 / Ames).